The primary structure comprises 147 residues: MATPAQRLHLLPLLLLLCGECAQVCGCNETGMLERLPRCGKAFAEMMQKVDVWKWCNLSEFIVYYESFTNCTEMETNIVGCYWPNPLAQSFITGIHRQFFSNCTVDRTHWEDPPDEVLIPLIAVPVLLTVAMAGLVVWRSKRTDRLL.

Positions 1-22 (MATPAQRLHLLPLLLLLCGECA) are cleaved as a signal peptide. Topologically, residues 23 to 112 (QVCGCNETGM…CTVDRTHWED (90 aa)) are extracellular. N-linked (GlcNAc...) asparagine glycosylation is found at N28, N57, N70, and N102. Intrachain disulfides connect C39/C71 and C56/C103. A helical transmembrane segment spans residues 113 to 137 (PPDEVLIPLIAVPVLLTVAMAGLVV). Residues 138–147 (WRSKRTDRLL) are Cytoplasmic-facing.

Belongs to the RAMP family. In terms of assembly, heterodimer of CALCRL and RAMP3; interaction induces allosteric modulation of CALCRL function and ligand specificity for adrenomedullin/ADM and intermedin/ADM2. Heterodimer of CALCR and RAMP3; interaction form the receptor complex AMYR3 for amylin/IAPP. Interacts with GPER1.

Its subcellular location is the cell membrane. The protein resides in the membrane. Accessory protein that interacts with and modulates the function of G-protein coupled receptors including calcitonin gene-related peptide type 1 receptor (CALCRL), calcitonin receptor (CALCR) and G-protein coupled estrogen receptor 1 (GPER1). Required for the transport of CALCRL and GPER1 receptors to the plasma membrane. Plays a role in cardioprotection by reducing cardiac hypertrophy and perivascular fibrosis in a GPER1-dependent manner. Together with CALCRL, form a receptor complex for adrenomedullin/ADM and intermedin/ADM2. Together with CALCR, act as a receptor complex for amylin/IAPP. The polypeptide is Receptor activity-modifying protein 3 (Rattus norvegicus (Rat)).